The sequence spans 197 residues: Beta-crystallin A2 (197 aa).

Positions 1 to 11 (MSSAPAQGPAP) are N-terminal arm. Beta/gamma crystallin 'Greek key' domains are found at residues 12-52 (ASLT…KVEN) and 53-99 (GAWV…RPVL). Positions 100 to 105 (CANHSD) are connecting peptide. 2 Beta/gamma crystallin 'Greek key' domains span residues 106-147 (SRVT…KVSS) and 148-196 (GAWV…RRVQ).

It belongs to the beta/gamma-crystallin family. As to quaternary structure, homo/heterodimer, or complexes of higher-order. The structure of beta-crystallin oligomers seems to be stabilized through interactions between the N-terminal arms.

Functionally, crystallins are the dominant structural components of the vertebrate eye lens. The sequence is that of Beta-crystallin A2 (CRYBA2) from Bos taurus (Bovine).